We begin with the raw amino-acid sequence, 159 residues long: Ribosomal RNA large subunit methyltransferase H (159 aa).

S-adenosyl-L-methionine is bound by residues Leu76, Gly108, and 127–132 (FGQLTL).

It belongs to the RNA methyltransferase RlmH family. As to quaternary structure, homodimer.

The protein localises to the cytoplasm. The enzyme catalyses pseudouridine(1915) in 23S rRNA + S-adenosyl-L-methionine = N(3)-methylpseudouridine(1915) in 23S rRNA + S-adenosyl-L-homocysteine + H(+). In terms of biological role, specifically methylates the pseudouridine at position 1915 (m3Psi1915) in 23S rRNA. The protein is Ribosomal RNA large subunit methyltransferase H of Streptococcus suis (strain 05ZYH33).